A 294-amino-acid chain; its full sequence is Proline iminopeptidase (294 aa).

One can recognise an AB hydrolase-1 domain in the interval 28–278; that stretch reads PLLLLHGGPG…GCGHMPFVQE (251 aa). The active-site Nucleophile is S106. Residue D245 is part of the active site. H272 serves as the catalytic Proton donor.

Belongs to the peptidase S33 family. In terms of assembly, homotrimer.

The protein localises to the cell envelope. It catalyses the reaction Release of N-terminal proline from a peptide.. Inhibited by 3,4-DCI, but no significant effect on enzyme activity by pepstatin A, E-64, 1,10-phenanthroline or EDTA. Its function is as follows. Releases the N-terminal proline from various substrates. Cleaves Pro-betaNA (L-prolyl-beta-naphthylamide) effectively. The sequence is that of Proline iminopeptidase (pip) from Lactobacillus delbrueckii subsp. lactis.